The chain runs to 193 residues: ATP-dependent Clp protease proteolytic subunit 1 (193 aa).

S98 serves as the catalytic Nucleophile. Residue H123 is part of the active site.

This sequence belongs to the peptidase S14 family. In terms of assembly, fourteen ClpP subunits assemble into 2 heptameric rings which stack back to back to give a disk-like structure with a central cavity, resembling the structure of eukaryotic proteasomes.

The protein localises to the cytoplasm. The catalysed reaction is Hydrolysis of proteins to small peptides in the presence of ATP and magnesium. alpha-casein is the usual test substrate. In the absence of ATP, only oligopeptides shorter than five residues are hydrolyzed (such as succinyl-Leu-Tyr-|-NHMec, and Leu-Tyr-Leu-|-Tyr-Trp, in which cleavage of the -Tyr-|-Leu- and -Tyr-|-Trp bonds also occurs).. In terms of biological role, cleaves peptides in various proteins in a process that requires ATP hydrolysis. Has a chymotrypsin-like activity. Plays a major role in the degradation of misfolded proteins. This Bacillus cereus (strain ZK / E33L) protein is ATP-dependent Clp protease proteolytic subunit 1.